A 1133-amino-acid polypeptide reads, in one-letter code: DNA-directed RNA polymerase III subunit RPC2 (1133 aa).

Lys186 contributes to the RNA binding site. Arg195 is a DNA binding site. Arg213 serves as a coordination point for RNA. Asp432 contributes to the DNA binding site. Residues Gln438 and Gln692 each contribute to the RNA site. Asp753 lines the Mg(2+) pocket. RNA is bound by residues Lys896, Lys904, and Lys1019. Arg1039, Ser1040, and Arg1046 together coordinate DNA. Residues Cys1080, Cys1083, Cys1092, and Cys1095 each contribute to the Zn(2+) site. A C4-type zinc finger spans residues 1080-1095 (CGQCGLLGYSGWCHYC).

It belongs to the RNA polymerase beta chain family. As to quaternary structure, component of the RNA polymerase III (Pol III) complex consisting of 17 subunits: a ten-subunit catalytic core composed of POLR3A/RPC1, POLR3B/RPC2, POLR1C/RPAC1, POLR1D/RPAC2, POLR3K/RPC10, POLR2E/RPABC1, POLR2F/RPABC2, POLR2H/RPABC3, POLR2K/RPABC4 and POLR2L/RPABC5; a mobile stalk composed of two subunits POLR3H/RPC8 and CRCP/RPC9, protruding from the core and functioning primarily in transcription initiation; and additional subunits homologous to general transcription factors of the RNA polymerase II machinery, POLR3C/RPC3-POLR3F/RPC6-POLR3G/RPC7 heterotrimer required for transcription initiation and POLR3D/RPC4-POLR3E/RPC5 heterodimer involved in both transcription initiation and termination. The cofactor is Mg(2+).

It localises to the nucleus. It is found in the cytoplasm. The protein resides in the cytosol. It carries out the reaction RNA(n) + a ribonucleoside 5'-triphosphate = RNA(n+1) + diphosphate. Functionally, catalytic core component of RNA polymerase III (Pol III), a DNA-dependent RNA polymerase which synthesizes small non-coding RNAs using the four ribonucleoside triphosphates as substrates. Synthesizes 5S rRNA, snRNAs, tRNAs and miRNAs from at least 500 distinct genomic loci. Pol III-mediated transcription cycle proceeds through transcription initiation, transcription elongation and transcription termination stages. During transcription initiation, Pol III is recruited to DNA promoters type I, II or III with the help of general transcription factors and other specific initiation factors. Once the polymerase has escaped from the promoter it enters the elongation phase during which RNA is actively polymerized, based on complementarity with the template DNA strand. Transcription termination involves the release of the RNA transcript and polymerase from the DNA. Forms Pol III active center together with the largest subunit POLR3A/RPC1. A single-stranded DNA template strand of the promoter is positioned within the central active site cleft of Pol III. Appends one nucleotide at a time to the 3' end of the nascent RNA, with POLR3A/RPC1 contributing a Mg(2+)-coordinating DxDGD motif, and POLR3B/RPC2 participating in the coordination of a second Mg(2+) ion and providing lysine residues believed to facilitate Watson-Crick base pairing between the incoming nucleotide and template base. Typically, Mg(2+) ions direct a 5' nucleoside triphosphate to form a phosphodiester bond with the 3' hydroxyl of the preceding nucleotide of the nascent RNA, with the elimination of pyrophosphate. Pol III plays a key role in sensing and limiting infection by intracellular bacteria and DNA viruses. Acts as a nuclear and cytosolic DNA sensor involved in innate immune response. Can sense non-self dsDNA that serves as template for transcription into dsRNA. The non-self RNA polymerase III transcripts, such as Epstein-Barr virus-encoded RNAs (EBERs) induce type I interferon and NF-kappa-B through the RIG-I pathway. In Homo sapiens (Human), this protein is DNA-directed RNA polymerase III subunit RPC2.